Reading from the N-terminus, the 255-residue chain is 5'-nucleotidase SurE (255 aa).

Residues D8, D9, S39, and N91 each contribute to the a divalent metal cation site.

Belongs to the SurE nucleotidase family. Requires a divalent metal cation as cofactor.

Its subcellular location is the cytoplasm. The catalysed reaction is a ribonucleoside 5'-phosphate + H2O = a ribonucleoside + phosphate. Nucleotidase that shows phosphatase activity on nucleoside 5'-monophosphates. The polypeptide is 5'-nucleotidase SurE (Acinetobacter baylyi (strain ATCC 33305 / BD413 / ADP1)).